We begin with the raw amino-acid sequence, 147 residues long: Two-component response regulator ORR11 (147 aa).

Residues 29–146 (HVLAVDDSSV…DVSRLFSRVL (118 aa)) enclose the Response regulatory domain. A 4-aspartylphosphate modification is found at D79.

Belongs to the ARR family. Type-A subfamily. In terms of processing, two-component system major event consists of a His-to-Asp phosphorelay between a sensor histidine kinase (HK) and a response regulator (RR). In plants, the His-to-Asp phosphorelay involves an additional intermediate named Histidine-containing phosphotransfer protein (HPt). This multistep phosphorelay consists of a His-Asp-His-Asp sequential transfer of a phosphate group between first a His and an Asp of the HK protein, followed by the transfer to a conserved His of the HPt protein and finally the transfer to an Asp in the receiver domain of the RR protein.

In terms of biological role, functions as a response regulator involved in His-to-Asp phosphorelay signal transduction system. Phosphorylation of the Asp residue in the receiver domain activates the ability of the protein to promote the transcription of target genes. Type-A response regulators seem to act as negative regulators of the cytokinin signaling. This Oryza sativa subsp. indica (Rice) protein is Two-component response regulator ORR11.